The chain runs to 269 residues: Ubiquinone/menaquinone biosynthesis C-methyltransferase UbiE (269 aa).

S-adenosyl-L-methionine-binding positions include T92, D113, and 141 to 142; that span reads NA.

Belongs to the class I-like SAM-binding methyltransferase superfamily. MenG/UbiE family.

The enzyme catalyses a 2-demethylmenaquinol + S-adenosyl-L-methionine = a menaquinol + S-adenosyl-L-homocysteine + H(+). The catalysed reaction is a 2-methoxy-6-(all-trans-polyprenyl)benzene-1,4-diol + S-adenosyl-L-methionine = a 5-methoxy-2-methyl-3-(all-trans-polyprenyl)benzene-1,4-diol + S-adenosyl-L-homocysteine + H(+). Its pathway is quinol/quinone metabolism; menaquinone biosynthesis; menaquinol from 1,4-dihydroxy-2-naphthoate: step 2/2. The protein operates within cofactor biosynthesis; ubiquinone biosynthesis. Methyltransferase required for the conversion of demethylmenaquinol (DMKH2) to menaquinol (MKH2) and the conversion of 2-polyprenyl-6-methoxy-1,4-benzoquinol (DDMQH2) to 2-polyprenyl-3-methyl-6-methoxy-1,4-benzoquinol (DMQH2). This Brucella melitensis biotype 2 (strain ATCC 23457) protein is Ubiquinone/menaquinone biosynthesis C-methyltransferase UbiE.